The chain runs to 505 residues: Lysine--tRNA ligase (505 aa).

The Mg(2+) site is built by Glu-415 and Glu-422.

Belongs to the class-II aminoacyl-tRNA synthetase family. As to quaternary structure, homodimer. Requires Mg(2+) as cofactor.

The protein resides in the cytoplasm. It catalyses the reaction tRNA(Lys) + L-lysine + ATP = L-lysyl-tRNA(Lys) + AMP + diphosphate. This is Lysine--tRNA ligase (lysS) from Salmonella typhimurium (strain LT2 / SGSC1412 / ATCC 700720).